The sequence spans 446 residues: MQKKYFGTDGIRGKVGNSLINAEFMLKLGWAVGRVLANSHSATVLIGKDTRISGYMIESALQAGLSAAGVNIKLTGPMPTPAIAYLTHSVRADAGIVISASHNHYPDNGVKFFNKDGFKLSDELELAIEKQIDKPMKTVVADRLGKAARMNEAHGRYIEFCKSTFPSNLTLKGLKIVVDCANGAAYAVAPSIFHELGAEVVAIADDPDGFNINQTCGATDTAHLQEMVVKHNADVGIAFDGDGDRLIMVDHHGLRVDGDELLCIMAIDRFYLKENAPLGVVGTIMSNLGLEQTLKRHHIAFERSPVGDRYVLDLMQQKGWFLGGESSGHIVDLGFTTTGDGVITALQILRIMQQAEKPLADLKKVMVKHPQVLINVPIKGILDIAQNPNIKKAITEAEKQLNGAGRILLRPSGTEPVIRVMVEGSDEGIVRQTAEMLAAAVQQSTL.

S101 (phosphoserine intermediate) is an active-site residue. The Mg(2+) site is built by S101, D240, D242, and D244. S101 carries the phosphoserine modification.

Belongs to the phosphohexose mutase family. Mg(2+) serves as cofactor. Activated by phosphorylation.

It carries out the reaction alpha-D-glucosamine 1-phosphate = D-glucosamine 6-phosphate. In terms of biological role, catalyzes the conversion of glucosamine-6-phosphate to glucosamine-1-phosphate. The sequence is that of Phosphoglucosamine mutase from Coxiella burnetii (strain CbuK_Q154) (Coxiella burnetii (strain Q154)).